A 272-amino-acid chain; its full sequence is Ribosomal RNA small subunit methyltransferase A (272 aa).

S-adenosyl-L-methionine-binding residues include His-10, Leu-12, Gly-37, Glu-57, Asp-82, and Asn-98.

The protein belongs to the class I-like SAM-binding methyltransferase superfamily. rRNA adenine N(6)-methyltransferase family. RsmA subfamily.

The protein localises to the cytoplasm. The catalysed reaction is adenosine(1518)/adenosine(1519) in 16S rRNA + 4 S-adenosyl-L-methionine = N(6)-dimethyladenosine(1518)/N(6)-dimethyladenosine(1519) in 16S rRNA + 4 S-adenosyl-L-homocysteine + 4 H(+). Specifically dimethylates two adjacent adenosines (A1518 and A1519) in the loop of a conserved hairpin near the 3'-end of 16S rRNA in the 30S particle. May play a critical role in biogenesis of 30S subunits. The protein is Ribosomal RNA small subunit methyltransferase A of Gloeobacter violaceus (strain ATCC 29082 / PCC 7421).